A 777-amino-acid polypeptide reads, in one-letter code: Cyclin-F (777 aa).

Residues 20–28 (KRRIKRRPR) carry the Nuclear localization signal 1 motif. Positions 29-76 (NLTILSLPEDVLFHILKWLSVGDILAVRAVHSHLKYLVDNHASVWASA) constitute an F-box domain. The Cyclin N-terminal domain maps to 288–405 (QASQAVNKQQ…EIISALEGKI (118 aa)). 3 short sequence motifs (d box) span residues 310-313 (RYIL), 343-346 (RRRL), and 349-352 (RYKL). Disordered stretches follow at residues 544-591 (QESP…TPTA) and 651-777 (QESS…HLAS). The Nuclear localization signal 2 signature appears at 568-574 (RRSKRKR). The segment at 582-761 (RGSFVTTPTA…ESGVHQQPVK (180 aa)) is PEST. Composition is skewed to low complexity over residues 695 to 708 (SGYS…PISS) and 719 to 731 (STSV…HSST). Residues 751–767 (PESGVHQQPVKRQNLSV) show a composition bias toward polar residues. The D box 4 signature appears at 762-765 (RQNL). The segment covering 768–777 (HSDKDMHLAS) has biased composition (basic and acidic residues).

It belongs to the cyclin family. Cyclin AB subfamily. Component of the SCF(CCNF) complex consisting of CUL1, RBX1, SKP1 and CCNF. Interacts with SKP1. Interacts with CUL1. Interacts with CCNB1; interaction is required for nuclear localization of CCNB1. Interacts with CCP110; this interaction leads to CCP110 ubiquitination and degradation via the proteasome pathway. Interacts (via the Cyclin N-terminal domain) with MYBL2/BMYB. Interacts with FZR1/CDH1 (via N-terminus). Interacts with RRM2 (via Cy motif and when phosphorylated at 'Thr-33'); the interaction occurs exclusively in G2 and early M. Interacts with CDC6 (via Cy motif); the interaction takes place during G2 and M phase. Degraded when the spindle assembly checkpoint is activated during the G2-M transition. Degradation is not dependent on the proteasome or ubiquitin and depends on the C-terminal PEST sequence. Post-translationally, phosphorylated just before cells enter into mitosis. In terms of processing, ubiquitinated by the anaphase-promoting complex (APC/C); leading to its degradation by the proteasome.

The protein localises to the nucleus. The protein resides in the cytoplasm. Its subcellular location is the perinuclear region. It is found in the cytoskeleton. It localises to the microtubule organizing center. The protein localises to the centrosome. The protein resides in the centriole. Its function is as follows. Substrate recognition component of a SCF (SKP1-CUL1-F-box protein) E3 ubiquitin-protein ligase complex which mediates the ubiquitination and subsequent proteasomal degradation of target proteins. The SCF(CCNF) E3 ubiquitin-protein ligase complex is an integral component of the ubiquitin proteasome system (UPS) and links proteasome degradation to the cell cycle. Mediates the substrate recognition and the proteasomal degradation of various target proteins involved in the regulation of cell cycle progression and in the maintenance of genome stability. Mediates the ubiquitination and subsequent proteasomal degradation of CP110 during G2 phase, thereby acting as an inhibitor of centrosome reduplication. In G2, mediates the ubiquitination and proteasomal degradation of CDC6, thereby suppressing DNA re-replication and preventing genome instability. Involved in the ubiquitination and degradation of the substrate adapter CDH1 of the anaphase-promoting complex (APC/C), thereby acting as an antagonist of APC/C in regulating G1 progression and S phase entry. May play a role in the G2 cell cycle checkpoint control after DNA damage, possibly by promoting the ubiquitination of MYBL2/BMYB. This Mus musculus (Mouse) protein is Cyclin-F (Ccnf).